The primary structure comprises 76 residues: MTVIRLTRIGRKKKPFYRVVVTDSRKRRDGGWIESIGYYNPLSEPKDIKIDKERLNYWKGVGAKMSERVEKLSQKA.

The protein belongs to the bacterial ribosomal protein bS16 family.

The sequence is that of Small ribosomal subunit protein bS16 from Helicobacter pylori (strain P12).